The chain runs to 327 residues: Ornithine carbamoyltransferase, mitochondrial (327 aa).

Residues 63-66 (STRT), Arg-114, His-141, and Gln-144 contribute to the carbamoyl phosphate site. 4 residues coordinate L-ornithine: Asn-172, Asp-236, Ser-240, and Met-241. Catalysis depends on Cys-276, which acts as the Proton acceptor. Residues 276-277 (CL) and Arg-303 contribute to the carbamoyl phosphate site.

The protein belongs to the aspartate/ornithine carbamoyltransferase superfamily. OTCase family. As to quaternary structure, interacts with trx2.

The protein localises to the mitochondrion matrix. It catalyses the reaction carbamoyl phosphate + L-ornithine = L-citrulline + phosphate + H(+). It participates in amino-acid biosynthesis; L-arginine biosynthesis; L-arginine from L-ornithine and carbamoyl phosphate: step 1/3. Ornithine carbamoyltransferase involved in the synthesis of arginine from glutamate via ornithine and the urea cycle. This is Ornithine carbamoyltransferase, mitochondrial (arg3) from Schizosaccharomyces pombe (strain 972 / ATCC 24843) (Fission yeast).